The primary structure comprises 428 residues: Putative F-box protein At3g22421 (428 aa).

One can recognise an F-box domain in the interval 4–50 (TTTISHLPTELLDEIISRVPLKSTRAVRLTCKNWDSLFKNRSFMKEE).

This Arabidopsis thaliana (Mouse-ear cress) protein is Putative F-box protein At3g22421.